A 396-amino-acid chain; its full sequence is Phosphoglycerate kinase (396 aa).

Residues 21–23, arginine 36, 59–62, arginine 119, and arginine 156 each bind substrate; these read DFN and HLGK. Residues lysine 206, glycine 294, glutamate 325, and 352-355 contribute to the ATP site; that span reads GGDS.

This sequence belongs to the phosphoglycerate kinase family. In terms of assembly, monomer.

The protein resides in the cytoplasm. The enzyme catalyses (2R)-3-phosphoglycerate + ATP = (2R)-3-phospho-glyceroyl phosphate + ADP. It functions in the pathway carbohydrate degradation; glycolysis; pyruvate from D-glyceraldehyde 3-phosphate: step 2/5. This Staphylococcus aureus (strain bovine RF122 / ET3-1) protein is Phosphoglycerate kinase.